The following is a 450-amino-acid chain: Tubulin beta-3 chain (450 aa).

Residues 1–4 (MREI) carry the MREI motif motif. 4 residues coordinate GDP: glycine 10, glutamine 11, cysteine 12, and glutamine 15. Glutamine 11 is a binding site for GTP. Position 69 (glutamate 69) interacts with GTP. Glutamate 69 is a binding site for Mg(2+). Positions 99, 138, 142, 143, and 144 each coordinate GDP. Positions 138, 142, 143, and 144 each coordinate GTP. Serine 172 carries the phosphoserine; by CDK1 modification. Aspartate 177, asparagine 204, tyrosine 222, and asparagine 226 together coordinate GDP. Asparagine 204 contacts GTP. Position 226 (asparagine 226) interacts with GTP. Residues 425 to 450 (YQDATAEEEGEMYEDDEEESEAQGPK) form a disordered region. A compositionally biased stretch (acidic residues) spans 429–450 (TAEEEGEMYEDDEEESEAQGPK). A 5-glutamyl polyglutamate modification is found at glutamate 438. Residue serine 444 is modified to Phosphoserine.

The protein belongs to the tubulin family. Heterodimer of alpha- and beta-tubulin. A typical microtubule is a hollow water-filled tube with an outer diameter of 25 nm and an inner diameter of 15 nM. Alpha-beta heterodimers associate head-to-tail to form protofilaments running lengthwise along the microtubule wall with the beta-tubulin subunit facing the microtubule plus end conferring a structural polarity. Microtubules usually have 13 protofilaments but different protofilament numbers can be found in some organisms and specialized cells. Interacts with gamma-tubulin; the interaction allows microtubules to nucleate from the gamma-tubulin ring complex (gTuRC). Interacts with UNC5C (via cytoplasmic domain); this interaction is decreased by NTN1/Netrin-1. Interacts with NLRP5/MATER at cytoskeleton microtubules. Interacts with DPYSL5. Interacts with CFAP61. Mg(2+) serves as cofactor. Post-translationally, some glutamate residues at the C-terminus are polyglutamylated, resulting in polyglutamate chains on the gamma-carboxyl group. Polyglutamylation plays a key role in microtubule severing by spastin (SPAST). SPAST preferentially recognizes and acts on microtubules decorated with short polyglutamate tails: severing activity by SPAST increases as the number of glutamates per tubulin rises from one to eight, but decreases beyond this glutamylation threshold. Glutamylation is also involved in cilia motility. In terms of processing, some glutamate residues at the C-terminus are monoglycylated but not polyglycylated due to the absence of functional TTLL10 in human. Monoglycylation is mainly limited to tubulin incorporated into cilia and flagella axonemes, which is required for their stability and maintenance. Flagella glycylation controls sperm motility. Both polyglutamylation and monoglycylation can coexist on the same protein on adjacent residues, and lowering glycylation levels increases polyglutamylation, and reciprocally. Phosphorylated on Ser-172 by CDK1 during the cell cycle, from metaphase to telophase, but not in interphase. This phosphorylation inhibits tubulin incorporation into microtubules. As to expression, expression is primarily restricted to central and peripheral nervous system. Greatly increased expression in most cancerous tissues.

The protein localises to the cytoplasm. It localises to the cytoskeleton. The protein resides in the cell projection. Its subcellular location is the growth cone. It is found in the lamellipodium. The protein localises to the filopodium. Functionally, tubulin is the major constituent of microtubules, protein filaments consisting of alpha- and beta-tubulin heterodimers. Microtubules grow by the addition of GTP-tubulin dimers to the microtubule end, where a stabilizing cap forms. Below the cap, alpha-beta tubulin heterodimers are in GDP-bound state, owing to GTPase activity of alpha-tubulin. TUBB3 plays a critical role in proper axon guidance and maintenance. Binding of NTN1/Netrin-1 to its receptor UNC5C might cause dissociation of UNC5C from polymerized TUBB3 in microtubules and thereby lead to increased microtubule dynamics and axon repulsion. Plays a role in dorsal root ganglion axon projection towards the spinal cord. This is Tubulin beta-3 chain (TUBB3) from Homo sapiens (Human).